We begin with the raw amino-acid sequence, 402 residues long: Argininosuccinate synthase (402 aa).

7 to 15 lines the ATP pocket; the sequence is LYSGGLDTS. Residue Y83 participates in L-citrulline binding. An ATP-binding site is contributed by G113. L-aspartate is bound by residues T115, N119, and D120. N119 contacts L-citrulline. L-citrulline contacts are provided by R123, S169, S178, E253, and Y265.

The protein belongs to the argininosuccinate synthase family. Type 1 subfamily. Homotetramer.

It is found in the cytoplasm. It catalyses the reaction L-citrulline + L-aspartate + ATP = 2-(N(omega)-L-arginino)succinate + AMP + diphosphate + H(+). The protein operates within amino-acid biosynthesis; L-arginine biosynthesis; L-arginine from L-ornithine and carbamoyl phosphate: step 2/3. The protein is Argininosuccinate synthase of Thermoplasma acidophilum (strain ATCC 25905 / DSM 1728 / JCM 9062 / NBRC 15155 / AMRC-C165).